We begin with the raw amino-acid sequence, 354 residues long: 3'-hydroxy-N-methyl-(S)-coclaurine 4'-O-methyltransferase 1 (354 aa).

S-adenosyl-L-methionine is bound at residue Asp223. His261 acts as the Proton acceptor in catalysis.

The protein belongs to the class I-like SAM-binding methyltransferase superfamily. Cation-independent O-methyltransferase family. COMT subfamily. In terms of tissue distribution, expressed in roots, stems, leaves and flowers. Restricted to sieve elements of the phloem adjacent or proximal to laticifers.

It catalyses the reaction (S)-3'-hydroxy-N-methylcoclaurine + S-adenosyl-L-methionine = (S)-reticuline + S-adenosyl-L-homocysteine + H(+). It participates in alkaloid biosynthesis; (S)-reticuline biosynthesis; (S)-reticuline from (S)-norcoclaurine: step 4/4. Involved in the biosynthesis of benzylisoquinoline alkaloids. Catalyzes the transfer of the methyl group to the 4'-hydroxyl group of 3'-hydroxy-N-methylcoclaurine to form reticuline. Also involved in the papaverine biosynthesis. The protein is 3'-hydroxy-N-methyl-(S)-coclaurine 4'-O-methyltransferase 1 of Papaver somniferum (Opium poppy).